A 1202-amino-acid polypeptide reads, in one-letter code: Protein jagged-2 (1202 aa).

Over 1–1037 (GACCDGDGRT…ETVVMGGSST (1037 aa)) the chain is Extracellular. An N-linked (GlcNAc...) asparagine glycan is attached at asparagine 107. The DSL domain occupies 150-194 (VRCDENYYSATCNKFCRPRNDFFGHYTCDQYGNKACMDGWMGKEC). 42 cysteine pairs are disulfide-bonded: cysteine 152–cysteine 161, cysteine 165–cysteine 177, cysteine 185–cysteine 194, cysteine 199–cysteine 210, cysteine 203–cysteine 216, cysteine 218–cysteine 227, cysteine 230–cysteine 241, cysteine 236–cysteine 247, cysteine 249–cysteine 258, cysteine 265–cysteine 277, cysteine 271–cysteine 287, cysteine 289–cysteine 298, cysteine 305–cysteine 316, cysteine 310–cysteine 325, cysteine 327–cysteine 336, cysteine 343–cysteine 354, cysteine 348–cysteine 363, cysteine 365–cysteine 374, cysteine 381–cysteine 392, cysteine 386–cysteine 401, cysteine 403–cysteine 412, cysteine 419–cysteine 429, cysteine 423–cysteine 438, cysteine 440–cysteine 449, cysteine 456–cysteine 467, cysteine 461–cysteine 476, cysteine 478–cysteine 487, cysteine 495–cysteine 506, cysteine 500–cysteine 515, cysteine 517–cysteine 526, cysteine 544–cysteine 567, cysteine 561–cysteine 577, cysteine 579–cysteine 588, cysteine 595–cysteine 606, cysteine 600–cysteine 615, cysteine 617–cysteine 626, cysteine 633–cysteine 644, cysteine 638–cysteine 653, cysteine 655–cysteine 664, cysteine 671–cysteine 682, cysteine 676–cysteine 691, and cysteine 693–cysteine 702. In terms of domain architecture, EGF-like 1 spans 195-228 (KEAVCKQGCNLLHGGCTVPGECRCSYGWQGKFCD). One can recognise an EGF-like 2; atypical domain in the interval 229 to 259 (ECVPYPGCVHGSCVEPWHCDCETNWGGLLCD). 2 EGF-like domains span residues 261–299 (DLNY…KNCE) and 301–337 (AEHA…PTCA). An EGF-like 5; calcium-binding domain is found at 339 to 375 (DIDECASNPCAAGGTCVDQVDGFECICPEQWVGATCQ). Residues 377 to 413 (DANECEGKPCLNAFSCKNLIGGYYCDCLPGWKGANCH) form the EGF-like 6; calcium-binding domain. An EGF-like 7; calcium-binding domain is found at 415-450 (NINDCHGQCQHGGTCKDLVNGYQCVCPRGFGGRHCE). 2 EGF-like domains span residues 452–488 (EYYK…PLCE) and 490–527 (DVDL…KNCS). Asparagine 525 carries N-linked (GlcNAc...) asparagine glycosylation. An EGF-like 10; atypical domain is found at 529–589 (PRETCPGGAC…DSGFTGTYCH (61 aa)). Asparagine 574 carries N-linked (GlcNAc...) asparagine glycosylation. The EGF-like 11; calcium-binding domain occupies 591–627 (NIDDCMGQPCRNGGTCIDEVDSFACFCPSGWEGELCD). One can recognise an EGF-like 12; calcium-binding domain in the interval 629 to 665 (NPNDCLPDPCHSRGRCYDLVNDFYCVCDDGWKDKTCH). 2 EGF-like domains span residues 667 to 703 (REFQ…STCT) and 706 to 742 (KNSS…RTCT). N-linked (GlcNAc...) asparagine glycosylation occurs at asparagine 707. 9 disulfides stabilise this stretch: cysteine 710-cysteine 721, cysteine 715-cysteine 730, cysteine 732-cysteine 741, cysteine 748-cysteine 759, cysteine 753-cysteine 768, cysteine 770-cysteine 779, cysteine 786-cysteine 797, cysteine 791-cysteine 806, and cysteine 808-cysteine 817. The EGF-like 15; calcium-binding domain maps to 744-780 (NTNDCNPLPCYNGGICVDGVNWFRCECAPGFAGPDCR). Residues 782–818 (NIDECQSSPCAYGATCVDEINGYRCSCPPGRSGPRCQ) enclose the EGF-like 16; calcium-binding domain. Residue asparagine 1015 is glycosylated (N-linked (GlcNAc...) asparagine). A helical membrane pass occupies residues 1038-1058 (GLLVPVLCSVFSVLWLACMVI). Over 1059–1202 (CVWWTRKRRK…TKDVRCAGRE (144 aa)) the chain is Cytoplasmic. 3 stretches are compositionally biased toward basic and acidic residues: residues 1070 to 1080 (RERSRLPRDES), 1147 to 1159 (LSRG…RSRE), and 1185 to 1202 (VDNR…AGRE). The disordered stretch occupies residues 1070–1202 (RERSRLPRDE…TKDVRCAGRE (133 aa)). Serine 1080 is modified (phosphoserine).

The protein resides in the membrane. In terms of biological role, putative Notch ligand involved in the mediation of Notch signaling. May have a role in neurogenesis in the peripheral nervous system, limb development and in the adult brain. In Rattus norvegicus (Rat), this protein is Protein jagged-2 (Jag2).